The sequence spans 447 residues: Oxysterols receptor LXR-alpha (447 aa).

Disordered stretches follow at residues 1–37 and 65–88; these read MSLW…GGSS and ALLT…KKGP. Residues 1–96 form a transactivation AF-1; required for ligand-independent transactivation function region; it reads MSLWLGAPVP…GPAPKMLGNE (96 aa). A compositionally biased stretch (low complexity) spans 24–37; sequence GAQDASSQAQGGSS. The nuclear receptor DNA-binding region spans 95 to 170; it reads NELCSVCGDK…AGMREECVLS (76 aa). NR C4-type zinc fingers lie at residues 98 to 118 and 134 to 158; these read CSVC…CEGC and CHSG…LRKC. The segment at 180–202 is disordered; that stretch reads KRQEEEQAHATSLPPRASSPPQI. Residues 205-447 form a transactivation AF-2; required for ligand-dependent transactivation function; mediates interaction with CCAR2 region; the sequence is QLSPEQLGMI…LLSEIWDVHE (243 aa). The NR LBD domain maps to 209–447; it reads EQLGMIEKLV…LLSEIWDVHE (239 aa).

It belongs to the nuclear hormone receptor family. NR1 subfamily. Heterodimer of NR1H3 and RXR (retinoic acid receptor). Interacts with CCAR2 (via N-terminus) in a ligand-independent manner. Interacts with SIRT1 and this interaction is inhibited by CCAR2. Interacts with GPS2. Post-translationally, ubiquitinated by UBR5, leading to its degradation: UBR5 specifically recognizes and binds ligand-bound NR1H3 when it is not associated with coactivators (NCOAs). In presence of NCOAs, the UBR5-degron is not accessible, preventing its ubiquitination and degradation. In terms of tissue distribution, visceral organs specific expression. Strong expression was found in liver, kidney and intestine followed by spleen and to a lesser extent the adrenals.

The protein resides in the nucleus. Its subcellular location is the cytoplasm. Nuclear receptor that exhibits a ligand-dependent transcriptional activation activity. Interaction with retinoic acid receptor (RXR) shifts RXR from its role as a silent DNA-binding partner to an active ligand-binding subunit in mediating retinoid responses through target genes defined by LXRES. LXRES are DR4-type response elements characterized by direct repeats of two similar hexanuclotide half-sites spaced by four nucleotides. Plays an important role in the regulation of cholesterol homeostasis, regulating cholesterol uptake through MYLIP-dependent ubiquitination of LDLR, VLDLR and LRP8. Interplays functionally with RORA for the regulation of genes involved in liver metabolism. Induces LPCAT3-dependent phospholipid remodeling in endoplasmic reticulum (ER) membranes of hepatocytes, driving SREBF1 processing and lipogenesis. Via LPCAT3, triggers the incorporation of arachidonate into phosphatidylcholines of ER membranes, increasing membrane dynamics and enabling triacylglycerols transfer to nascent very low-density lipoprotein (VLDL) particles. Via LPCAT3 also counteracts lipid-induced ER stress response and inflammation, likely by modulating SRC kinase membrane compartmentalization and limiting the synthesis of lipid inflammatory mediators. This Homo sapiens (Human) protein is Oxysterols receptor LXR-alpha (NR1H3).